Reading from the N-terminus, the 308-residue chain is MLSAAEGILLCVVTSEAVLGVLGDTFIALANCMEYAKNKKLSKIGFILIGLAISRIGVVWIIILQGYMQVFFPHILTFGNITEYITYIWVFLNHLSVWFATNLNILYFLKIANFSNSVFLWLKSRVRVVFIFLSGCLLTSWLLCFPQFSKMLNNSKMYWGNTSWLQQQKNVFLINQSLTNLGIFFFIIVSLITCFLLIVFLWRHIRQMHSDGSGLRDLNTEAHVKAMRVLISFAVLFILHFVGLSIQVLCFFLPQNNLLFITGLIATCLYPCGHSIILILGNKQLKQASLKALQHLTCCETKRNLSVT.

Residues 1-7 (MLSAAEG) lie on the Extracellular side of the membrane. A helical membrane pass occupies residues 8–28 (ILLCVVTSEAVLGVLGDTFIA). Topologically, residues 29–43 (LANCMEYAKNKKLSK) are cytoplasmic. Residues 44–64 (IGFILIGLAISRIGVVWIIIL) traverse the membrane as a helical segment. At 65-94 (QGYMQVFFPHILTFGNITEYITYIWVFLNH) the chain is on the extracellular side. The N-linked (GlcNAc...) asparagine glycan is linked to asparagine 80. The helical transmembrane segment at 95–115 (LSVWFATNLNILYFLKIANFS) threads the bilayer. The Cytoplasmic portion of the chain corresponds to 116 to 127 (NSVFLWLKSRVR). Residues 128–148 (VVFIFLSGCLLTSWLLCFPQF) traverse the membrane as a helical segment. Over 149 to 180 (SKMLNNSKMYWGNTSWLQQQKNVFLINQSLTN) the chain is Extracellular. N-linked (GlcNAc...) asparagine glycosylation is found at asparagine 153, asparagine 161, and asparagine 175. Residues 181–201 (LGIFFFIIVSLITCFLLIVFL) form a helical membrane-spanning segment. The Cytoplasmic segment spans residues 202–232 (WRHIRQMHSDGSGLRDLNTEAHVKAMRVLIS). A helical transmembrane segment spans residues 233 to 253 (FAVLFILHFVGLSIQVLCFFL). Over 254 to 258 (PQNNL) the chain is Extracellular. A helical transmembrane segment spans residues 259–279 (LFITGLIATCLYPCGHSIILI). Residues 280 to 308 (LGNKQLKQASLKALQHLTCCETKRNLSVT) are Cytoplasmic-facing.

The protein belongs to the G-protein coupled receptor T2R family.

The protein localises to the membrane. Its function is as follows. Putative taste receptor which may play a role in the perception of bitterness. This is Taste receptor type 2 member 107 from Rattus norvegicus (Rat).